We begin with the raw amino-acid sequence, 198 residues long: Imidazole glycerol phosphate synthase subunit HisH (198 aa).

The Glutamine amidotransferase type-1 domain maps to 1–194 (MIAIIDYGLG…LKGGFQDDQT (194 aa)). Cys77 serves as the catalytic Nucleophile. Active-site residues include His169 and Glu171.

As to quaternary structure, heterodimer of HisH and HisF.

Its subcellular location is the cytoplasm. The catalysed reaction is 5-[(5-phospho-1-deoxy-D-ribulos-1-ylimino)methylamino]-1-(5-phospho-beta-D-ribosyl)imidazole-4-carboxamide + L-glutamine = D-erythro-1-(imidazol-4-yl)glycerol 3-phosphate + 5-amino-1-(5-phospho-beta-D-ribosyl)imidazole-4-carboxamide + L-glutamate + H(+). The enzyme catalyses L-glutamine + H2O = L-glutamate + NH4(+). The protein operates within amino-acid biosynthesis; L-histidine biosynthesis; L-histidine from 5-phospho-alpha-D-ribose 1-diphosphate: step 5/9. Its function is as follows. IGPS catalyzes the conversion of PRFAR and glutamine to IGP, AICAR and glutamate. The HisH subunit catalyzes the hydrolysis of glutamine to glutamate and ammonia as part of the synthesis of IGP and AICAR. The resulting ammonia molecule is channeled to the active site of HisF. In Staphylococcus saprophyticus subsp. saprophyticus (strain ATCC 15305 / DSM 20229 / NCIMB 8711 / NCTC 7292 / S-41), this protein is Imidazole glycerol phosphate synthase subunit HisH.